We begin with the raw amino-acid sequence, 142 residues long: MKTFVAKPETVKRDWYVVDATGKTLGRLAAELARRLRGKHKAEYTPHVDTGDYIVVINAEKVAVTGNKETDKLYYWHTGYVGGIKQATFKEMIARRPEAVIEIAVKGMLPKGPLGRAMFRKLKVYAGSEHNHAAQQPQVLDI.

It belongs to the universal ribosomal protein uL13 family. As to quaternary structure, part of the 50S ribosomal subunit.

Functionally, this protein is one of the early assembly proteins of the 50S ribosomal subunit, although it is not seen to bind rRNA by itself. It is important during the early stages of 50S assembly. In Histophilus somni (strain 2336) (Haemophilus somnus), this protein is Large ribosomal subunit protein uL13.